An 81-amino-acid chain; its full sequence is Trefoil factor 3 (81 aa).

The first 23 residues, 1-23, serve as a signal peptide directing secretion; that stretch reads MEARTFWLLVVAVLALGSSSSTG. A P-type domain is found at 31–74; sequence NQCAVPAKDRVDCGYPEVTPEQCNNRGCCFDSSIHGVPWCFKPL. Disulfide bonds link C33–C59, C43–C58, and C53–C70.

As to quaternary structure, monomer. Homodimer; disulfide-linked.

It localises to the secreted. It is found in the extracellular space. The protein localises to the extracellular matrix. Its subcellular location is the cytoplasm. Involved in the maintenance and repair of the intestinal mucosa. Promotes the mobility of epithelial cells in healing processes (motogen). The chain is Trefoil factor 3 (TFF3) from Bos taurus (Bovine).